Here is a 163-residue protein sequence, read N- to C-terminus: Neurotrophin-3 (163 aa).

Residues 1-3 (IQS) form the signal peptide. Residues 4-119 (TSMDQGILTE…VLNRTSRRKR (116 aa)) constitute a propeptide that is removed on maturation. A glycan (N-linked (GlcNAc...) asparagine) is linked at asparagine 112. Residues 114-133 (TSRRKREGKSHRGEYSVCDS) form a disordered region. A compositionally biased stretch (basic and acidic residues) spans 123–133 (SHRGEYSVCDS).

The protein belongs to the NGF-beta family.

It localises to the secreted. Functionally, seems to promote the survival of visceral and proprioceptive sensory neurons. This Lichanura trivirgata (Rosy boa) protein is Neurotrophin-3 (NTF3).